Consider the following 483-residue polypeptide: UDP-N-acetylmuramate--L-alanine ligase (483 aa).

An ATP-binding site is contributed by 125-131 (GTHGKTT).

It belongs to the MurCDEF family.

The protein localises to the cytoplasm. The catalysed reaction is UDP-N-acetyl-alpha-D-muramate + L-alanine + ATP = UDP-N-acetyl-alpha-D-muramoyl-L-alanine + ADP + phosphate + H(+). The protein operates within cell wall biogenesis; peptidoglycan biosynthesis. In terms of biological role, cell wall formation. The polypeptide is UDP-N-acetylmuramate--L-alanine ligase (Pseudoalteromonas translucida (strain TAC 125)).